Reading from the N-terminus, the 316-residue chain is MNDVSKASLPKAIFLMGPTASGKTALAIELRKVLPVELISVDSALIYRGMDIGTAKPNADELKAAPHRLLDIRDPSQAYSAADFRRDALAQMAEITSAGRIPLLVGGTMLYFKALLEGLSPLPSADPEVRSRIEQQAAELGWEALHQQLQEIDPVAAARIHPNDPQRLSRALEVFFISGKTLTELTQTSGDALPYQVHQFAIAPASRELLHQRIELRFHQMLASGFEAEVRALFARGDLHTDLPSIRCVGYRQMWSYIEGEISYDEMVYRGVCATRQLAKRQMTWLRGWEGVRWLDSENPDRARKEVLQVVGAIAD.

An ATP-binding site is contributed by 17–24 (GPTASGKT). 19–24 (TASGKT) serves as a coordination point for substrate. Interaction with substrate tRNA stretches follow at residues 42 to 45 (DSAL), 166 to 170 (QRLSR), and 247 to 252 (RCVGYR).

Belongs to the IPP transferase family. As to quaternary structure, monomer. Mg(2+) is required as a cofactor.

It carries out the reaction adenosine(37) in tRNA + dimethylallyl diphosphate = N(6)-dimethylallyladenosine(37) in tRNA + diphosphate. Catalyzes the transfer of a dimethylallyl group onto the adenine at position 37 in tRNAs that read codons beginning with uridine, leading to the formation of N6-(dimethylallyl)adenosine (i(6)A). This is tRNA dimethylallyltransferase from Salmonella enteritidis PT4 (strain P125109).